A 211-amino-acid polypeptide reads, in one-letter code: Protein-methionine-sulfoxide reductase heme-binding subunit MsrQ (211 aa).

4 helical membrane passes run 10 to 30, 82 to 102, 116 to 136, and 153 to 173; these read WLKVCLHLAGLLPFLWLVWAI, LWCFAWATLHLTSYALLELGV, PYLTLGIISWVILLALAFTST, and FVYLVAILAPIHYLWSVKIIS.

The protein belongs to the MsrQ family. In terms of assembly, heterodimer of a catalytic subunit (MsrP) and a heme-binding subunit (MsrQ). FMN serves as cofactor. It depends on heme b as a cofactor.

Its subcellular location is the cell inner membrane. Functionally, part of the MsrPQ system that repairs oxidized periplasmic proteins containing methionine sulfoxide residues (Met-O), using respiratory chain electrons. Thus protects these proteins from oxidative-stress damage caused by reactive species of oxygen and chlorine generated by the host defense mechanisms. MsrPQ is essential for the maintenance of envelope integrity under bleach stress, rescuing a wide series of structurally unrelated periplasmic proteins from methionine oxidation, including the primary periplasmic chaperone SurA and the lipoprotein Pal. MsrQ provides electrons for reduction to the reductase catalytic subunit MsrP, using the quinone pool of the respiratory chain. The chain is Protein-methionine-sulfoxide reductase heme-binding subunit MsrQ from Shigella dysenteriae serotype 1 (strain Sd197).